A 448-amino-acid chain; its full sequence is Iroquois-class homeodomain protein irx-3 (448 aa).

Positions 108–170 (DPSRPKNATR…NARRRLKKEN (63 aa)) form a DNA-binding region, homeobox; TALE-type. 2 disordered regions span residues 171-250 (KMTW…NAPE) and 387-410 (SGTA…DRSS). The segment covering 195–222 (KHEDDEEIDLENIDTEDIESKEDLDDPD) has biased composition (acidic residues). Over residues 223-237 (TDIHSDSKTDARSDS) the composition is skewed to basic and acidic residues. The segment covering 238-248 (EASDGFEDLNA) has biased composition (acidic residues). The segment covering 396–406 (AEPKHSTDSLT) has biased composition (basic and acidic residues).

It belongs to the TALE/IRO homeobox family. As to expression, expressed in the neural plate in overlapping patterns with other irx members, which all share an anterior border of expression. Outside the nervous system and at tailbud stages, expressed in the developing otic vesicle, branchial arches, prospective heart region and pronephros.

The protein resides in the nucleus. Its function is as follows. Acts partially redundantly with other irx members in neural patterning. Required for formation of the posterior forebrain, midbrain, hindbrain, and to a lesser extent, spinal cord. Both up-regulates and down-regulates gene expression during neural development. Acts early in neural plate development to induce proneural gene expression and specify a neural precursor state. Also up-regulates repressors that prevent neuronal differentiation. Required during at least two stages of pronephros kidney development; during neurula stages, maintains transcription of key renal genes to define the size and identity of the pronephric anlage, probably in part through regulation of bmp-signaling. Subsequently required for proper formation of the intermediate tubule segment of the pronephros. This Xenopus tropicalis (Western clawed frog) protein is Iroquois-class homeodomain protein irx-3.